Consider the following 630-residue polypeptide: Kelch-like protein 14 (630 aa).

The region spanning 33-153 (CDVTLTAQGQ…LYTANVTLSL (121 aa)) is the BTB domain. A disordered region spans residues 69–117 (GGGVGGQDGLGAPKDQQQQQQPQQQPPQQQQPPPQEEPGTPSSSPDDKL). Low complexity predominate over residues 84 to 96 (QQQQQQPQQQPPQ). Residues 212–281 (VEDVLLLNFE…PAPELVERVQ (70 aa)) form the BACK domain. Kelch repeat units follow at residues 325-374 (MLLL…EVEN), 375-426 (FLFV…RLDK), 427-473 (HLYV…VHNG), 475-520 (IYIS…VMND), 522-572 (LYAI…VLDD), and 574-622 (IYLV…TVIL).

As to quaternary structure, interacts with TOR1A. In terms of tissue distribution, expressed in the brain, primarily in neurons. In the cerebral cortex, mostly expressed in layers I and II (at protein level). Also observed in some neurons of the corpus striatum (at protein level). Expressed at high levels in the hippocampus, including in pyramidal cells of the CA1 and CA3 layers (at protein level). In the cerebellum, expression in Purkinje cells is higher than in granular cells (at protein level). Also detected in the medial septum, ventral pallidum, thalamus, hypothalamus, amygdala, inferior colliculi, locus caeruleus, peripyramidal nucleus, raphe nucleus, reticular formation, spinal trigeminal nucleus, and vestibular nuclei (at protein level). Low expression, if any, in glial cells (at protein level). Not observed in the corpus callosum.

Its subcellular location is the cytoplasm. It is found in the cytosol. It localises to the endoplasmic reticulum membrane. The chain is Kelch-like protein 14 (Klhl14) from Mus musculus (Mouse).